Consider the following 545-residue polypeptide: Probable zinc metalloprotease EGY2, chloroplastic (545 aa).

The N-terminal 63 residues, 1-63 (MQLPAMSCSP…QIRNRRFVCQ (63 aa)), are a transit peptide targeting the chloroplast. Residues 66–142 (TETEPDGDGN…DATPASDAQE (77 aa)) are disordered. The span at 68 to 85 (TEPDGDGNGDEEKEELGD) shows a compositional bias: acidic residues. Composition is skewed to polar residues over residues 88 to 109 (SSPSVYSVTQENGSAESETNAD) and 117 to 129 (NTEPLSSSDTVQN). Transmembrane regions (helical) follow at residues 256-276 (AVPEWFAAASFGVVTIFTLLL), 300-320 (VYGALVTAAIIGVHEIAHILA), 325-345 (GIKLAVPYFVPSWQIGSFGAI), 363-383 (AAGPLAGFSLGFVLLLLGFIL), 426-446 (PLVLWAWAGLLINAINSIPAG), 473-493 (LLGISALFNDVAFYWVVLIFF), and 513-533 (YISIGVAILLFGLLVCLPYPF).

It belongs to the peptidase M50B family.

It localises to the plastid. The protein resides in the chloroplast membrane. Functionally, probable membrane-associated metalloprotease that may be involved in chloroplast development. This is Probable zinc metalloprotease EGY2, chloroplastic (EGY2) from Oryza sativa subsp. indica (Rice).